The primary structure comprises 149 residues: Ribonuclease pancreatic (149 aa).

Residues 1-25 (MGLEKSLILFPLFFLLLGWVQPSLG) form the signal peptide. Residues Lys32 and Arg35 each coordinate substrate. The active-site Proton acceptor is His37. Intrachain disulfides connect Cys51–Cys109, Cys65–Cys120, Cys83–Cys135, and Cys90–Cys97. Substrate-binding positions include 66–70 (KPVNT) and Lys91. The active-site Proton donor is His144.

It belongs to the pancreatic ribonuclease family. Monomer. Interacts with and forms tight 1:1 complexes with RNH1. Dimerization of two such complexes may occur. Interaction with RNH1 inhibits this protein. In terms of tissue distribution, pancreas.

The protein localises to the secreted. The enzyme catalyses an [RNA] containing cytidine + H2O = an [RNA]-3'-cytidine-3'-phosphate + a 5'-hydroxy-ribonucleotide-3'-[RNA].. The catalysed reaction is an [RNA] containing uridine + H2O = an [RNA]-3'-uridine-3'-phosphate + a 5'-hydroxy-ribonucleotide-3'-[RNA].. In terms of biological role, endonuclease that catalyzes the cleavage of RNA on the 3' side of pyrimidine nucleotides. Acts on single-stranded and double-stranded RNA. This chain is Ribonuclease pancreatic (Rnase1), found in Mus musculus (Mouse).